The chain runs to 205 residues: Mitotic spindle assembly checkpoint protein MAD2A (205 aa).

Position 2 is an N-acetylalanine (A2). 6 positions are modified to phosphoserine: S6, S130, S170, S178, S185, and S195. An HORMA domain is found at 14–197 (RGSAEIVAEF…TTIHKVNSMV (184 aa)). Positions 195–205 (SMVAYKIPVND) are required for assuming the closed conformation and for interaction with CDC20.

This sequence belongs to the MAD2 family. In terms of assembly, monomer and homodimer. Heterodimerizes with MAD2L1 in order to form a tetrameric MAD1L1-MAD2L1 core complex. In the closed and open conformation, interacts with MAD1L1. Formation of a heterotetrameric core complex containing two molecules each of MAD1L1 and of MAD2L1 promotes binding of another molecule of MAD2L1 to each MAD2L1, resulting in a heterohexamer. Interacts with MAD2L1BP. Interacts with ADAM17/TACE. Interacts with CDC20. Dimeric MAD2L1 in the closed conformation interacts with CDC20. Monomeric MAD2L1 in the open conformation does not interact with CDC20. CDC20 competes with MAD1L1 for MAD2L1 binding. In the closed conformation, interacts with BUB1B. Interacts with TTK. Interacts with TPR. Binds to UBD (via ubiquitin-like 1 domain) during mitosis. Interacts with isoform 1 and isoform 2 of NEK2. Interacts with HSF1; this interaction occurs in mitosis. Interacts with isoform 3 of MAD1L1; this interaction leads to the cytoplasmic sequestration of MAD2L1. In terms of processing, phosphorylated on multiple serine residues. The level of phosphorylation varies during the cell cycle and is highest during mitosis. Phosphorylation abolishes interaction with MAD1L1 and reduces interaction with CDC20. Phosphorylated by NEK2.

It is found in the nucleus. The protein resides in the chromosome. It localises to the centromere. The protein localises to the kinetochore. Its subcellular location is the cytoplasm. It is found in the cytoskeleton. The protein resides in the spindle pole. Its function is as follows. Component of the spindle-assembly checkpoint that prevents the onset of anaphase until all chromosomes are properly aligned at the metaphase plate. In the closed conformation (C-MAD2) forms a heterotetrameric complex with MAD1L1 at unattached kinetochores during prometaphase, the complex recruits open conformation molecules of MAD2L1 (O-MAD2) and then promotes the conversion of O-MAD2 to C-MAD2. Required for the execution of the mitotic checkpoint which monitors the process of kinetochore-spindle attachment and inhibits the activity of the anaphase promoting complex by sequestering CDC20 until all chromosomes are aligned at the metaphase plate. The protein is Mitotic spindle assembly checkpoint protein MAD2A (MAD2L1) of Homo sapiens (Human).